Consider the following 1556-residue polypeptide: Ras guanine nucleotide exchange factor G (1556 aa).

Disordered stretches follow at residues 19-63 (IGNI…KNRG), 93-141 (LQLN…SSTT), 163-239 (SHVT…LSPS), and 254-296 (ATDS…NNNS). 2 stretches are compositionally biased toward low complexity: residues 25–54 (NNNN…SGSN) and 96–141 (NDTD…SSTT). Over residues 170–186 (DDDDDDESSSSEEDFDS) the composition is skewed to acidic residues. A compositionally biased stretch (low complexity) spans 196–216 (TSSTTATTTTTTTSVSPLTSS). Residues 256–271 (DSDNQSLEPCNNKTIV) are compositionally biased toward polar residues. Residues 279–295 (DNNNNHNNNNNNNNNNN) show a composition bias toward low complexity. In terms of domain architecture, F-box 1 spans 307 to 353 (NKTFLDLDEKIYLKIFGYLFAEDLCSINRVSKHLCNIINNQQLWKDL). The segment at 385 to 416 (NNNNNNNNNNNNNNNNSNISNNNNNINNSNGN) is disordered. Positions 679–726 (VFDISRVSDILLIKIFRNLDSIKDLSVCQRVSKRWNKAIAISSLWEQL) constitute an F-box 2 domain. Disordered stretches follow at residues 762 to 815 (QPSP…NGLN) and 827 to 1101 (GSNL…ITNN). The segment covering 827 to 848 (GSNLSNGGNSGSSFSPFNPLSG) has biased composition (low complexity). The segment covering 849–866 (SNGGSSFGPFGSGGGGGS) has biased composition (gly residues). Composition is skewed to low complexity over residues 867 to 880 (NSNI…LNSS) and 888 to 910 (FLAM…TIST). Positions 911–935 (NCTPTGGSTTNSPNFQSPMVSSSTV) are enriched in polar residues. 2 stretches are compositionally biased toward low complexity: residues 943 to 957 (SPNL…ISLS) and 972 to 1053 (PDSS…IQPI). Polar residues predominate over residues 1059 to 1076 (VNNNGSQSDLSKISDLNA). The span at 1077 to 1101 (NPNTTTTTTTNTIESSSSSSSITNN) shows a compositional bias: low complexity. One can recognise an N-terminal Ras-GEF domain in the interval 1116 to 1244 (MINVQKLMNL…LIRSFSRKLS (129 aa)). Residues 1254 to 1279 (IGITGGKSSRKGGGSGSGSGSGGGSG) form a disordered region. A compositionally biased stretch (gly residues) spans 1264–1279 (KGGGSGSGSGSGGGSG). In terms of domain architecture, Ras-GEF spans 1317–1548 (PAEEIAKQLT…YRVSMQREPR (232 aa)).

In terms of biological role, promotes the exchange of Ras-bound GDP by GTP. The protein is Ras guanine nucleotide exchange factor G (gefG) of Dictyostelium discoideum (Social amoeba).